The following is a 316-amino-acid chain: Thiamine-monophosphate kinase (316 aa).

Mg(2+)-binding residues include Asp-26, Thr-49, and Asp-50. Asp-57 contacts substrate. Asp-79 is a Mg(2+) binding site. ATP-binding positions include Tyr-109, 126–127 (GD), and Arg-151. Asp-127 contacts Mg(2+). Mg(2+) is bound at residue Asp-198. Ser-200 provides a ligand contact to ATP. Residue Asp-201 participates in Mg(2+) binding. Positions 251 and 305 each coordinate substrate.

It belongs to the thiamine-monophosphate kinase family.

The catalysed reaction is thiamine phosphate + ATP = thiamine diphosphate + ADP. It participates in cofactor biosynthesis; thiamine diphosphate biosynthesis; thiamine diphosphate from thiamine phosphate: step 1/1. Functionally, catalyzes the ATP-dependent phosphorylation of thiamine-monophosphate (TMP) to form thiamine-pyrophosphate (TPP), the active form of vitamin B1. The polypeptide is Thiamine-monophosphate kinase (Rhodopirellula baltica (strain DSM 10527 / NCIMB 13988 / SH1)).